Consider the following 99-residue polypeptide: CLAVATA3/ESR (CLE)-related protein 17 (99 aa).

Residues 1 to 21 (MTHVLVRRQGQGKKRRWDVNM) form the signal peptide. A compositionally biased stretch (basic and acidic residues) spans 77–89 (LSRDDIYGDDKRV). The interval 77-99 (LSRDDIYGDDKRVVHTGPNPLHN) is disordered. P94 carries the hydroxyproline modification. An O-linked (Ara...) hydroxyproline glycan is attached at P94.

The protein belongs to the CLV3/ESR signal peptide family. The O-glycosylation (arabinosylation) of the hydroxyproline Pro-94 enhances binding affinity of the CLE17p peptide for its receptor. Mostly expressed in seedlings, roots, flowers, stems and apex, and, to a lower extent, in leaves and siliques.

It localises to the secreted. Its subcellular location is the extracellular space. Functionally, extracellular signal peptide that regulates cell fate. Represses root apical meristem maintenance. Regulates the transition of protophloem cells from proliferation to differentiation, thus impinging on postembryonic growth capacity of the root meristem; this signaling pathway requires CRN and CLV2. This chain is CLAVATA3/ESR (CLE)-related protein 17, found in Arabidopsis thaliana (Mouse-ear cress).